Here is a 72-residue protein sequence, read N- to C-terminus: Putative ORF1 protein (72 aa).

In Leishmania RNA virus 1 - 1 (isolate Leishmania guyanensis) (LRV-1-1), this protein is Putative ORF1 protein (ORF1).